The primary structure comprises 105 residues: uncharacterized protein (105 aa).

The next 3 membrane-spanning stretches (helical) occupy residues 14–34 (ILLMLRLAVTAVAVFLAIVAW), 41–61 (ETVCFIAGVLCMYLAQLFAFL), and 80–100 (VGFTLELLPLACFIASLIFTI).

The protein localises to the cell membrane. This is an uncharacterized protein from Treponema pallidum (strain Nichols).